The primary structure comprises 454 residues: GTPase Der (454 aa).

EngA-type G domains are found at residues 3–167 and 181–354; these read PVIT…GIAE and MKIA…AAAM. Residues 9 to 16, 56 to 60, 119 to 122, 187 to 194, 234 to 238, and 299 to 302 contribute to the GTP site; these read GRPNVGKS, DTGGF, NKTE, DTAGL, and NKWD. Residues 355-439 form the KH-like domain; the sequence is AKLPTPRLTR…PLRIQMNTAK (85 aa).

It belongs to the TRAFAC class TrmE-Era-EngA-EngB-Septin-like GTPase superfamily. EngA (Der) GTPase family. Associates with the 50S ribosomal subunit.

Its function is as follows. GTPase that plays an essential role in the late steps of ribosome biogenesis. The sequence is that of GTPase Der from Polynucleobacter asymbioticus (strain DSM 18221 / CIP 109841 / QLW-P1DMWA-1) (Polynucleobacter necessarius subsp. asymbioticus).